The sequence spans 362 residues: Aspartate carbamoyltransferase catalytic subunit (362 aa).

The disordered stretch occupies residues 1-22 (MPKTAMTDSTSKTSTNTASSDM). Low complexity predominate over residues 7–20 (TDSTSKTSTNTASS). Residues Arg100 and Thr101 each coordinate carbamoyl phosphate. Lys128 lines the L-aspartate pocket. 3 residues coordinate carbamoyl phosphate: Arg150, His180, and Gln183. Residues Arg214 and Arg269 each contribute to the L-aspartate site. Residues Gly310 and Pro311 each contribute to the carbamoyl phosphate site.

It belongs to the aspartate/ornithine carbamoyltransferase superfamily. ATCase family. In terms of assembly, heterododecamer (2C3:3R2) of six catalytic PyrB chains organized as two trimers (C3), and six regulatory PyrI chains organized as three dimers (R2).

The enzyme catalyses carbamoyl phosphate + L-aspartate = N-carbamoyl-L-aspartate + phosphate + H(+). It participates in pyrimidine metabolism; UMP biosynthesis via de novo pathway; (S)-dihydroorotate from bicarbonate: step 2/3. Functionally, catalyzes the condensation of carbamoyl phosphate and aspartate to form carbamoyl aspartate and inorganic phosphate, the committed step in the de novo pyrimidine nucleotide biosynthesis pathway. The polypeptide is Aspartate carbamoyltransferase catalytic subunit (Psychrobacter sp. (strain PRwf-1)).